Here is a 505-residue protein sequence, read N- to C-terminus: Cytochrome P450 71A2 (505 aa).

Residues 7–27 traverse the membrane as a helical segment; sequence WYSLLIPLFVFIFLLIHHCFF. C448 contacts heme.

It belongs to the cytochrome P450 family. It depends on heme as a cofactor.

It localises to the membrane. In terms of biological role, may have a role in maturation, such as during flavor formation or other metabolite production specific to aging tissues. The chain is Cytochrome P450 71A2 (CYP71A2) from Solanum melongena (Eggplant).